The following is a 241-amino-acid chain: 2-C-methyl-D-erythritol 4-phosphate cytidylyltransferase (241 aa).

The protein belongs to the IspD/TarI cytidylyltransferase family. IspD subfamily. Homodimer.

The enzyme catalyses 2-C-methyl-D-erythritol 4-phosphate + CTP + H(+) = 4-CDP-2-C-methyl-D-erythritol + diphosphate. It functions in the pathway isoprenoid biosynthesis; isopentenyl diphosphate biosynthesis via DXP pathway; isopentenyl diphosphate from 1-deoxy-D-xylulose 5-phosphate: step 2/6. In terms of biological role, catalyzes the formation of 4-diphosphocytidyl-2-C-methyl-D-erythritol from CTP and 2-C-methyl-D-erythritol 4-phosphate (MEP). The polypeptide is 2-C-methyl-D-erythritol 4-phosphate cytidylyltransferase (Yersinia pseudotuberculosis serotype I (strain IP32953)).